A 203-amino-acid polypeptide reads, in one-letter code: Holliday junction branch migration complex subunit RuvA (203 aa).

Positions 1 to 64 (MIGRLRGIVL…EDAQLLFGFN (64 aa)) are domain I. Residues 65–142 (NKQERTLFRE…KGLHGDLFTP (78 aa)) form a domain II region. The interval 143–154 (AADLVLTSPASP) is flexible linker. The tract at residues 155-203 (AVDDAEAEAVAALVSLGYKPQEASRMVSKVAQADASSETLIREALRAAL) is domain III.

This sequence belongs to the RuvA family. In terms of assembly, homotetramer. Forms an RuvA(8)-RuvB(12)-Holliday junction (HJ) complex. HJ DNA is sandwiched between 2 RuvA tetramers; dsDNA enters through RuvA and exits via RuvB. An RuvB hexamer assembles on each DNA strand where it exits the tetramer. Each RuvB hexamer is contacted by two RuvA subunits (via domain III) on 2 adjacent RuvB subunits; this complex drives branch migration. In the full resolvosome a probable DNA-RuvA(4)-RuvB(12)-RuvC(2) complex forms which resolves the HJ.

The protein resides in the cytoplasm. In terms of biological role, the RuvA-RuvB-RuvC complex processes Holliday junction (HJ) DNA during genetic recombination and DNA repair, while the RuvA-RuvB complex plays an important role in the rescue of blocked DNA replication forks via replication fork reversal (RFR). RuvA specifically binds to HJ cruciform DNA, conferring on it an open structure. The RuvB hexamer acts as an ATP-dependent pump, pulling dsDNA into and through the RuvAB complex. HJ branch migration allows RuvC to scan DNA until it finds its consensus sequence, where it cleaves and resolves the cruciform DNA. This is Holliday junction branch migration complex subunit RuvA from Cronobacter sakazakii (strain ATCC BAA-894) (Enterobacter sakazakii).